Consider the following 282-residue polypeptide: 4-hydroxybenzoate octaprenyltransferase (282 aa).

The next 9 membrane-spanning stretches (helical) occupy residues 17-37, 40-60, 90-110, 113-133, 135-155, 163-183, 207-227, 231-251, and 262-282; these read IGILLLWYPTAWALWMANQGF, IDLLMIFLLGTVFMRSAGCVI, AFILLFILLCASLFLLLKLPI, FYFAVISVLITFLYPFCKRFF, APQLVLGLAFSMGIPMAFIAS, FIVLFLINFSWIIAYDTMYAM, LIIALLLIFLHSLWLVWAINK, CFFYLLWCTAAGILTYQLKLI, and AFLVSGYYGLVMWFAVGLALI.

The protein belongs to the UbiA prenyltransferase family. Requires Mg(2+) as cofactor.

The protein resides in the cell inner membrane. The catalysed reaction is all-trans-octaprenyl diphosphate + 4-hydroxybenzoate = 4-hydroxy-3-(all-trans-octaprenyl)benzoate + diphosphate. It functions in the pathway cofactor biosynthesis; ubiquinone biosynthesis. Catalyzes the prenylation of para-hydroxybenzoate (PHB) with an all-trans polyprenyl group. Mediates the second step in the final reaction sequence of ubiquinone-8 (UQ-8) biosynthesis, which is the condensation of the polyisoprenoid side chain with PHB, generating the first membrane-bound Q intermediate 3-octaprenyl-4-hydroxybenzoate. The chain is 4-hydroxybenzoate octaprenyltransferase from Legionella pneumophila (strain Lens).